A 1905-amino-acid polypeptide reads, in one-letter code: von Willebrand factor A domain-containing protein 8 (1905 aa).

The transit peptide at 1 to 45 directs the protein to the mitochondrion; the sequence is MQSRLLLLGAPGGLGDVASRRVRLLLRQVLRGRPGGDQQRLEVRL. Positions 1–260 are interaction with PEX7; that stretch reads MQSRLLLLGA…PLDPPLRSRF (260 aa). 446–453 is a binding site for ATP; the sequence is GGKGCGKT. Residues 1541-1560 are compositionally biased toward basic and acidic residues; that stretch reads ERDSNEDVSDPKHGKEDPDN. The tract at residues 1541 to 1583 is disordered; sequence ERDSNEDVSDPKHGKEDPDNMPHVGGNTWAGGTGGRDTAGLGG. Positions 1568–1583 are enriched in gly residues; that stretch reads TWAGGTGGRDTAGLGG. Residues 1714–1896 form the VWFA domain; that stretch reads RLRLVVDVSG…KKIPQILQQI (183 aa).

In terms of assembly, monomer. Interacts with PEX7. Interacts with PEX5 in a PEX7-dependent manner. As to expression, isoform 1 is predominantly expressed in liver, kidney, pancreas, heart, and skeletal muscle (at protein level).

Its subcellular location is the mitochondrion. In terms of biological role, exhibits ATPase activity in vitro. The polypeptide is von Willebrand factor A domain-containing protein 8 (Vwa8) (Mus musculus (Mouse)).